Reading from the N-terminus, the 437-residue chain is Methionine aminopeptidase 2 (437 aa).

The tract at residues 1–90 is disordered; sequence MAAQAAPAEE…LFPNNQYPKG (90 aa). A compositionally biased stretch (basic and acidic residues) spans 10–20; the sequence is ELSKLSVDETK. The span at 31 to 42 shows a compositional bias: acidic residues; the sequence is SDAESGDEEAEE. The segment covering 52 to 66 has biased composition (basic residues); it reads AKKKKKRKPKKKKKA. His-190 serves as a coordination point for substrate. Asp-210, Asp-221, and His-290 together coordinate a divalent metal cation. His-298 serves as a coordination point for substrate. The a divalent metal cation site is built by Glu-323 and Glu-418.

It belongs to the peptidase M24A family. Methionine aminopeptidase eukaryotic type 2 subfamily. It depends on Co(2+) as a cofactor. Requires Zn(2+) as cofactor. The cofactor is Mn(2+). Fe(2+) is required as a cofactor.

The protein resides in the cytoplasm. The enzyme catalyses Release of N-terminal amino acids, preferentially methionine, from peptides and arylamides.. Cotranslationally removes the N-terminal methionine from nascent proteins. The N-terminal methionine is often cleaved when the second residue in the primary sequence is small and uncharged (Met-Ala-, Cys, Gly, Pro, Ser, Thr, or Val). This Neurospora crassa (strain ATCC 24698 / 74-OR23-1A / CBS 708.71 / DSM 1257 / FGSC 987) protein is Methionine aminopeptidase 2.